A 263-amino-acid chain; its full sequence is 3-methyl-2-oxobutanoate hydroxymethyltransferase (263 aa).

Residues aspartate 45 and aspartate 84 each coordinate Mg(2+). 3-methyl-2-oxobutanoate is bound by residues aspartate 45 to serine 46, aspartate 84, and lysine 112. Glutamate 114 serves as a coordination point for Mg(2+). Glutamate 180 functions as the Proton acceptor in the catalytic mechanism.

Belongs to the PanB family. In terms of assembly, homodecamer; pentamer of dimers. It depends on Mg(2+) as a cofactor.

Its subcellular location is the cytoplasm. The catalysed reaction is 3-methyl-2-oxobutanoate + (6R)-5,10-methylene-5,6,7,8-tetrahydrofolate + H2O = 2-dehydropantoate + (6S)-5,6,7,8-tetrahydrofolate. It participates in cofactor biosynthesis; (R)-pantothenate biosynthesis; (R)-pantoate from 3-methyl-2-oxobutanoate: step 1/2. Its function is as follows. Catalyzes the reversible reaction in which hydroxymethyl group from 5,10-methylenetetrahydrofolate is transferred onto alpha-ketoisovalerate to form ketopantoate. This is 3-methyl-2-oxobutanoate hydroxymethyltransferase from Salmonella agona (strain SL483).